A 461-amino-acid chain; its full sequence is MSLRLKLHNTLTREKSEFAPIDADNVRMYVCGPTVYDFAHIGNARPVIVFDVLFRLLRHVYGEDHVTYARNITDLDDKINARALRDYPHLPLNDAIHAVTKKTADQFHDDVAALGCLQPTVEPRATDYIAEMIYLIERLIERGHAYKAGGEVLFDTRSMADYGQLSKRPLDEQQAGARVAVEAHKKNPGDFVLWKLSSESEPGWESPWGLGRPGWHIECSAMAGRYLGEVFDIHGGGLDLIFPHHENEIAQSRCAHGTHVMANVWMHNGFVQVEGRKMSKSEGNFVTIYELLHTDKFGGRQWPGEVLRLAMLMTHYREPIDFSVKRLEEAERLLSKWPAAETSDAAADETVLEALADDLNTVAAVQALHALAHAANTDPSRLPAFAASAALLGVLPKKTEMDEAIVSAVDALVELRLEMLKAKNFAEADRLRDELSEKGIQLKDGKDKETGERTTTWELKR.

Cys-31 is a binding site for Zn(2+). Positions 33 to 43 match the 'HIGH' region motif; it reads PTVYDFAHIGN. Zn(2+) contacts are provided by Cys-219, His-244, and Glu-248. The 'KMSKS' region signature appears at 277 to 281; the sequence is KMSKS. Lys-280 serves as a coordination point for ATP. Residues 436 to 452 show a composition bias toward basic and acidic residues; it reads SEKGIQLKDGKDKETGE. Positions 436 to 461 are disordered; the sequence is SEKGIQLKDGKDKETGERTTTWELKR.

The protein belongs to the class-I aminoacyl-tRNA synthetase family. Monomer. The cofactor is Zn(2+).

The protein resides in the cytoplasm. It carries out the reaction tRNA(Cys) + L-cysteine + ATP = L-cysteinyl-tRNA(Cys) + AMP + diphosphate. This Agrobacterium fabrum (strain C58 / ATCC 33970) (Agrobacterium tumefaciens (strain C58)) protein is Cysteine--tRNA ligase.